Here is a 506-residue protein sequence, read N- to C-terminus: Maturase K (506 aa).

Belongs to the intron maturase 2 family. MatK subfamily.

The protein resides in the plastid. The protein localises to the chloroplast. Usually encoded in the trnK tRNA gene intron. Probably assists in splicing its own and other chloroplast group II introns. This is Maturase K from Angiopteris evecta (Mule's foot fern).